Reading from the N-terminus, the 354-residue chain is Chaperone protein dnaJ 49 (354 aa).

Residues 99-163 (DYYAILGLEK…NSRRQFDQVG (65 aa)) enclose the J domain. Residues 237-257 (CLTIIQILPFFLLLLLAYLPF) traverse the membrane as a helical segment.

The protein belongs to the DnaJ family. C/III subfamily.

The protein resides in the membrane. Plays a continuous role in plant development probably in the structural organization of compartments. The chain is Chaperone protein dnaJ 49 (ATJ49) from Arabidopsis thaliana (Mouse-ear cress).